The primary structure comprises 135 residues: Crossover junction endodeoxyribonuclease Hje (135 aa).

Positions 10, 39, and 52 each coordinate Mg(2+).

It belongs to the Holliday junction resolvase Hjc family. Hje subfamily. Homodimer. The cofactor is Mg(2+).

It catalyses the reaction Endonucleolytic cleavage at a junction such as a reciprocal single-stranded crossover between two homologous DNA duplexes (Holliday junction).. A structure-specific endonuclease that resolves Holliday junction (HJ) intermediates during genetic recombination. Acts only on 4-way DNA junctions in a sequence non-specific manner; introduces paired nicks in opposing strands 2 bases 3' of the point of strand exchange only on continuous strands of 4-way junction DNA. Cleaves both mobile and immobile junctions. Plays a more direct role in DNA repair than Hjc. Overexpression of this protein decreases the growth rate, and leads to genomic instability, and global transcriptomic changes. This is Crossover junction endodeoxyribonuclease Hje from Saccharolobus islandicus (strain REY15A) (Sulfolobus islandicus).